The chain runs to 303 residues: uncharacterized protein (303 aa).

Residues 7-12 and asparagine 101 contribute to the NADP(+) site; that span reads GAGGVG. Lysine 184 functions as the Proton donor in the catalytic mechanism. Glutamate 267 contacts NADP(+).

It belongs to the ketopantoate reductase family.

This is an uncharacterized protein from Bacillus subtilis (strain 168).